The chain runs to 158 residues: Histone H2B.1 (158 aa).

N6-acetyllysine is present on residues Lys-7 and Lys-25. 2 disordered regions span residues 26–45 (AAAG…PKKG) and 135–158 (VHNF…GQQT). Residues 135 to 144 (VHNFESETSK) are compositionally biased toward basic and acidic residues. Residues 147-158 (SQGRKRGRGQQT) are compositionally biased toward basic residues.

It belongs to the histone H2B family. As to quaternary structure, the nucleosome is a histone octamer containing two molecules each of H2A, H2B, H3 and H4 assembled in one H3-H4 heterotetramer and two H2A-H2B heterodimers. The octamer wraps approximately 147 bp of DNA. Post-translationally, can be acetylated to form H2BK6ac and H2BK33ac. As to expression, expressed in the generative cell within the bicellular pollen. Not detected in other reproductive or vegetative tissues.

It localises to the nucleus. The protein resides in the chromosome. Functionally, core component of nucleosome. Nucleosomes wrap and compact DNA into chromatin, limiting DNA accessibility to the cellular machineries which require DNA as a template. Histones thereby play a central role in transcription regulation, DNA repair, DNA replication and chromosomal stability. DNA accessibility is regulated via a complex set of post-translational modifications of histones, also called histone code, and nucleosome remodeling. This is Histone H2B.1 from Lilium longiflorum (Trumpet lily).